The following is a 460-amino-acid chain: MSFTIAIIGRPNVGKSTLFNRLVGQKLALVDDKPGVTRDRREGQARLGDLDFTVIDTAGLDEGPRGSLTARMQEQTETAIAAADALMFVFDARAGLTPTDRSFADFARRANKPVVLVANKSEGRHGEAGALESYALGLGDPVGVSAEHGEGMSDLYDALRGVMPEPTEEAEEFDDDDIIESEDISQRPIRVAIVGRPNAGKSTLINYLLGEERLLTSPEAGTTRDSISVELNWQGRDFRIFDTAGLRRRSRIEEKLEKLSVADTLRAARFAEVVVLMMDAQNRFEEQDLRIADLIEREGRALVIAVNKWDLMGRQSSLIAALRTDADHLLPQVKGMPIVAVSGLMGEGVDRLMTAIQDAYAIWNRRVPTAALNRWFEQAVDANPPPAVSGRRLKLNYVTQAKARPPSFIVFCSRADAVPESYLRYLVNSLRGFFDLPGTPIRITLREKANPFAHKRKRKS.

EngA-type G domains lie at 3–167 and 189–364; these read FTIA…PEPT and IRVA…AIWN. GTP contacts are provided by residues 9–16, 56–60, 119–122, 195–202, 242–246, and 307–310; these read GRPNVGKS, DTAGL, NKSE, GRPNAGKS, and NKWD. A KH-like domain is found at 365-449; sequence RRVPTAALNR…PIRITLREKA (85 aa).

Belongs to the TRAFAC class TrmE-Era-EngA-EngB-Septin-like GTPase superfamily. EngA (Der) GTPase family. Associates with the 50S ribosomal subunit.

Its function is as follows. GTPase that plays an essential role in the late steps of ribosome biogenesis. This is GTPase Der from Nitrobacter hamburgensis (strain DSM 10229 / NCIMB 13809 / X14).